A 328-amino-acid chain; its full sequence is Olfactory receptor 2AJ1 (328 aa).

Residues 1 to 25 lie on the Extracellular side of the membrane; that stretch reads MGHQNHTFSSDFILLGLFSSSPTSV. A glycan (N-linked (GlcNAc...) asparagine) is linked at Asn-5. Residues 26–49 traverse the membrane as a helical segment; it reads VFFLVLFVIFIMSVTENTLMILLI. Topologically, residues 50 to 57 are cytoplasmic; sequence RSDSRLHT. The chain crosses the membrane as a helical span at residues 58-79; the sequence is PMYFLLSHLSLMDILHVSNIVP. The Extracellular segment spans residues 80 to 100; that stretch reads KMVTNFLSGSRTISFAGCGFQ. Residues Cys-97 and Cys-189 are joined by a disulfide bond. Residues 101–120 traverse the membrane as a helical segment; sequence VFLSLTLLGGECLLLAAMSC. Topologically, residues 121–139 are cytoplasmic; that stretch reads DRYVAICHPLRYPILMKEY. The chain crosses the membrane as a helical span at residues 140 to 158; the sequence is ASALMAGGSWLIGVFNSTV. The Extracellular portion of the chain corresponds to 159–195; sequence HTAYALQFPFCGSRAIDHFFCEVPAMLKLSCADTTRY. The helical transmembrane segment at 196-219 threads the bilayer; it reads ERGVCVSAVIFLLIPFSLISASYG. At 220–236 the chain is on the cytoplasmic side; sequence QIILTVLQMKSSEARKK. The helical transmembrane segment at 237–259 threads the bilayer; that stretch reads SFSTCSFHMIVVTMYYGPFIFTY. Over 260-272 the chain is Extracellular; the sequence is MRPKSYHTPGQDK. The chain crosses the membrane as a helical span at residues 273 to 292; the sequence is FLAIFYTILTPTLNPFIYSF. At 293–328 the chain is on the cytoplasmic side; that stretch reads RNKDVLAVMKNMLKSNFLHKKMNRKIPECVFCLFLC.

It belongs to the G-protein coupled receptor 1 family.

It localises to the cell membrane. Odorant receptor. This is Olfactory receptor 2AJ1 (OR2AJ1) from Homo sapiens (Human).